A 486-amino-acid polypeptide reads, in one-letter code: Cardiolipin synthase A (486 aa).

Helical transmembrane passes span 3-23 (IFYNLIKCLIFSTYWLLIANI) and 38-58 (MSWLLTIYIIPFIGISIWFFF). 2 consecutive PLD phosphodiesterase domains span residues 219–246 (VDVRQHRKIILIDNYIAYSGSMNLVDPY) and 399–426 (QKGLLHSKSILVDQQLSLIGTVNLDMRS). Catalysis depends on residues H224, K226, D231, H404, K406, and D411.

Belongs to the phospholipase D family. Cardiolipin synthase subfamily. ClsA sub-subfamily.

It localises to the cell inner membrane. The catalysed reaction is 2 a 1,2-diacyl-sn-glycero-3-phospho-(1'-sn-glycerol) = a cardiolipin + glycerol. Catalyzes the reversible phosphatidyl group transfer from one phosphatidylglycerol molecule to another to form cardiolipin (CL) (diphosphatidylglycerol) and glycerol. In Buchnera aphidicola subsp. Acyrthosiphon pisum (strain APS) (Acyrthosiphon pisum symbiotic bacterium), this protein is Cardiolipin synthase A.